Here is a 118-residue protein sequence, read N- to C-terminus: UPF0295 protein BT9727_0449 (118 aa).

Helical transmembrane passes span 12–32 and 43–63; these read IRTF…LGVF and FMMV…WIGM.

It belongs to the UPF0295 family.

The protein localises to the cell membrane. This chain is UPF0295 protein BT9727_0449, found in Bacillus thuringiensis subsp. konkukian (strain 97-27).